We begin with the raw amino-acid sequence, 1004 residues long: UPF0182 protein Mflv_4654 (1004 aa).

The next 7 helical transmembrane spans lie at 18-38 (FLIA…RFID), 63-83 (LVIF…GLAL), 114-134 (LIGI…GQSY), 176-196 (FVGV…FGGI), 211-231 (IQLI…YWFD), 260-280 (KLIL…AIFL), and 288-308 (IGVV…PLVV). Positions 896 to 940 (PGADATATGPAATEPPAGQAPQTQGNNTAPPAAQPPNRQGQAPAG) are enriched in low complexity. Residues 896–960 (PGADATATGP…TGPTQLSAAK (65 aa)) form a disordered region.

This sequence belongs to the UPF0182 family.

The protein localises to the cell membrane. In Mycolicibacterium gilvum (strain PYR-GCK) (Mycobacterium gilvum (strain PYR-GCK)), this protein is UPF0182 protein Mflv_4654.